The sequence spans 140 residues: uncharacterized protein (140 aa).

The region spanning 2–140 (KAVIAKNEEQ…GIPHLQMMKD (139 aa)) is the N-acetyltransferase domain.

It belongs to the acetyltransferase family.

This is an uncharacterized protein from Bacillus subtilis (strain 168).